The primary structure comprises 835 residues: Ribonucleoside-diphosphate reductase large subunit (835 aa).

Residues 1-39 (MPPRAPRPAGAVSPPFPPLAGPPLKARAPRARDSPLTSP) form a disordered region. Substrate contacts are provided by residues threonine 262, 277 to 278 (SC), glycine 308, 489 to 493 (NLCTE), and 666 to 670 (PTVSS). Residues cysteine 278 and cysteine 506 are joined by a disulfide bond. The active-site Proton acceptor is the asparagine 489. Catalysis depends on cysteine 491, which acts as the Cysteine radical intermediate. The active-site Proton acceptor is glutamate 493.

This sequence belongs to the ribonucleoside diphosphate reductase large chain family. In terms of assembly, heterotetramer composed of a homodimer of the large subunit (R1) and a homodimer of the small subunit (R2). Larger multisubunit protein complex are also active, composed of (R1)n(R2)n.

It carries out the reaction a 2'-deoxyribonucleoside 5'-diphosphate + [thioredoxin]-disulfide + H2O = a ribonucleoside 5'-diphosphate + [thioredoxin]-dithiol. Functionally, ribonucleoside-diphosphate reductase holoenzyme provides the precursors necessary for viral DNA synthesis. Allows virus growth in non-dividing cells, as well as reactivation from latency in infected hosts. Catalyzes the biosynthesis of deoxyribonucleotides from the corresponding ribonucleotides. The chain is Ribonucleoside-diphosphate reductase large subunit from Suid herpesvirus 1 (strain Kaplan) (SuHV-1).